Consider the following 407-residue polypeptide: MITWVGIDDTDTYDKGCTTYVMYNMLKEFLKTKGEWRIITYPRLIRLNPNVPFKTRGNAAVSVGLNVDDPREALELAEWAVDAYSHKIGKTSPGIVVSISNNEHWIYWKALSDVIPLNAAVKWMSKLGVIYRGGRGVIGALASVMADLSQDSTLELLAYSESTPKPSIPIDLVKKLNDSTTPLTFENVSGDYVLIQPHGNDPVIFGIRGDSPYHIIHFASMLINEVDVEPRWLIYLTNQATGHHLNSIMNKPYTTGYVEGSVNEVRLVQGGNIEIRVNSTHVFSYRHYGFKSIDKATYLIAYGGFKPGVNSLDLYMEGGVALMLNNIVKNPRCPRCGSNLESTGRVGLLKCPKCGLITGLPRLMNYTSEFTLEEPREAEVRHLHKPTARIGLEGLVNVFNRPSLWII.

This sequence belongs to the TiaS family.

The protein localises to the cytoplasm. It carries out the reaction cytidine(34) in tRNA(Ile2) + agmatine + ATP + H2O = 2-agmatinylcytidine(34) in tRNA(Ile2) + AMP + 2 phosphate + 2 H(+). In terms of biological role, ATP-dependent agmatine transferase that catalyzes the formation of 2-agmatinylcytidine (agm2C) at the wobble position (C34) of tRNA(Ile2), converting the codon specificity from AUG to AUA. This Caldivirga maquilingensis (strain ATCC 700844 / DSM 13496 / JCM 10307 / IC-167) protein is tRNA(Ile2) 2-agmatinylcytidine synthetase TiaS.